The sequence spans 386 residues: Succinate--CoA ligase [ADP-forming] subunit beta (386 aa).

The ATP-grasp domain occupies 9–244; it reads KEILRKYGVP…HDEEDPLETR (236 aa). ATP is bound by residues Lys46, 53–55, Glu99, Cys102, and Glu107; that span reads GRG. Mg(2+) contacts are provided by Asn199 and Asp213. Residues Asn264 and 321-323 contribute to the substrate site; that span reads GIM.

It belongs to the succinate/malate CoA ligase beta subunit family. Heterotetramer of two alpha and two beta subunits. Mg(2+) is required as a cofactor.

It carries out the reaction succinate + ATP + CoA = succinyl-CoA + ADP + phosphate. The enzyme catalyses GTP + succinate + CoA = succinyl-CoA + GDP + phosphate. Its pathway is carbohydrate metabolism; tricarboxylic acid cycle; succinate from succinyl-CoA (ligase route): step 1/1. Succinyl-CoA synthetase functions in the citric acid cycle (TCA), coupling the hydrolysis of succinyl-CoA to the synthesis of either ATP or GTP and thus represents the only step of substrate-level phosphorylation in the TCA. The beta subunit provides nucleotide specificity of the enzyme and binds the substrate succinate, while the binding sites for coenzyme A and phosphate are found in the alpha subunit. The sequence is that of Succinate--CoA ligase [ADP-forming] subunit beta from Rickettsia akari (strain Hartford).